Here is a 309-residue protein sequence, read N- to C-terminus: Protein FdhE (309 aa).

It belongs to the FdhE family.

It is found in the cytoplasm. Its function is as follows. Necessary for formate dehydrogenase activity. This Salmonella enteritidis PT4 (strain P125109) protein is Protein FdhE.